Reading from the N-terminus, the 469-residue chain is Coumaroyl-CoA:anthocyanidin 3-O-glucoside-6''-O-coumaroyltransferase 1 (469 aa).

Methionine 1 carries the N-acetylmethionine modification. Catalysis depends on proton acceptor residues histidine 173 and aspartate 410.

Belongs to the plant acyltransferase family. Highly expressed in flowers, leaves and roots. Lower levels of expression in stems and siliques.

Functionally, involved in the acylation of the 6'' position of the 3-O-glucose residue of anthocyanin. Also able to use flavonol 3-glucosides as the acyl acceptor. The protein is Coumaroyl-CoA:anthocyanidin 3-O-glucoside-6''-O-coumaroyltransferase 1 (3AT1) of Arabidopsis thaliana (Mouse-ear cress).